A 161-amino-acid polypeptide reads, in one-letter code: Globin CTT-VIIB-6 (161 aa).

The signal sequence occupies residues 1 to 16 (MKFFAVLALCIVGAIA). Residues 18-161 (PLTADEASLV…NTFAIVVPRL (144 aa)) enclose the Globin domain. Histidine 76 and histidine 111 together coordinate heme b.

This sequence belongs to the globin family. As to quaternary structure, homodimer.

This chain is Globin CTT-VIIB-6 (CTT-7B6), found in Chironomus thummi thummi (Midge).